Here is a 180-residue protein sequence, read N- to C-terminus: Ferric nitrobindin-like protein (180 aa).

The short motif at 21–27 is the GXWXGXG element; it reads GRWEGAG.

The protein belongs to the nitrobindin family.

This is Ferric nitrobindin-like protein from Kineococcus radiotolerans (strain ATCC BAA-149 / DSM 14245 / SRS30216).